The following is a 429-amino-acid chain: Histidine--tRNA ligase (429 aa).

The protein belongs to the class-II aminoacyl-tRNA synthetase family. As to quaternary structure, homodimer.

The protein resides in the cytoplasm. It catalyses the reaction tRNA(His) + L-histidine + ATP = L-histidyl-tRNA(His) + AMP + diphosphate + H(+). This is Histidine--tRNA ligase from Prochlorococcus marinus subsp. pastoris (strain CCMP1986 / NIES-2087 / MED4).